A 165-amino-acid chain; its full sequence is SsrA-binding protein (165 aa).

The disordered stretch occupies residues 141–165; it reads KLHDKRENEKRKQSEREVKSALARY. The segment covering 144 to 159 has biased composition (basic and acidic residues); the sequence is DKRENEKRKQSEREVK.

It belongs to the SmpB family.

It is found in the cytoplasm. Its function is as follows. Required for rescue of stalled ribosomes mediated by trans-translation. Binds to transfer-messenger RNA (tmRNA), required for stable association of tmRNA with ribosomes. tmRNA and SmpB together mimic tRNA shape, replacing the anticodon stem-loop with SmpB. tmRNA is encoded by the ssrA gene; the 2 termini fold to resemble tRNA(Ala) and it encodes a 'tag peptide', a short internal open reading frame. During trans-translation Ala-aminoacylated tmRNA acts like a tRNA, entering the A-site of stalled ribosomes, displacing the stalled mRNA. The ribosome then switches to translate the ORF on the tmRNA; the nascent peptide is terminated with the 'tag peptide' encoded by the tmRNA and targeted for degradation. The ribosome is freed to recommence translation, which seems to be the essential function of trans-translation. The protein is SsrA-binding protein of Prochlorococcus marinus (strain SARG / CCMP1375 / SS120).